A 557-amino-acid polypeptide reads, in one-letter code: Glutamyl-tRNA(Gln) amidotransferase subunit B, mitochondrial (557 aa).

The N-terminal 41 residues, 1–41, are a transit peptide targeting the mitochondrion; that stretch reads MAAPMLRWGCRGRRWAFARVDGGSCHRRGAPTGSTSNQIRG. Residues 26-45 form a disordered region; it reads HRRGAPTGSTSNQIRGESSV. Over residues 32–45 the composition is skewed to polar residues; that stretch reads TGSTSNQIRGESSV. An N6-succinyllysine modification is found at lysine 529.

It belongs to the GatB/GatE family. GatB subfamily. In terms of assembly, subunit of the heterotrimeric GatCAB amidotransferase (AdT) complex, composed of A (QRSL1), B (GATB) and C (GATC) subunits. In terms of tissue distribution, predominantly expressed in tissues characterized by high rates of oxidative phosphorylation (OxPhos), including muscle and heart.

It localises to the mitochondrion. It catalyses the reaction L-glutamyl-tRNA(Gln) + L-glutamine + ATP + H2O = L-glutaminyl-tRNA(Gln) + L-glutamate + ADP + phosphate + H(+). Allows the formation of correctly charged Gln-tRNA(Gln) through the transamidation of misacylated Glu-tRNA(Gln) in the mitochondria. The reaction takes place in the presence of glutamine and ATP through an activated gamma-phospho-Glu-tRNA(Gln). In Homo sapiens (Human), this protein is Glutamyl-tRNA(Gln) amidotransferase subunit B, mitochondrial.